Reading from the N-terminus, the 256-residue chain is Small ribosomal subunit protein uS2 (256 aa).

The segment at 229-256 is disordered; that stretch reads PVDDNGDYGDFDEAIDEYADETDASESE. Residues 232 to 256 are compositionally biased toward acidic residues; sequence DNGDYGDFDEAIDEYADETDASESE.

Belongs to the universal ribosomal protein uS2 family.

The sequence is that of Small ribosomal subunit protein uS2 from Picosynechococcus sp. (strain ATCC 27264 / PCC 7002 / PR-6) (Agmenellum quadruplicatum).